The chain runs to 35 residues: Coatomer subunit alpha (35 aa).

In terms of assembly, oligomeric complex that consists of at least the alpha, beta, beta', gamma, delta, epsilon and zeta subunits. Interacts with SCYL1. Interacts with JAGN1. Interacts with TMEM41B. Interacts with SVEP1. Probably interacts with PEX11A. Gastric, duodenal and jejunal mucosa. Circulates in the blood. Seems to be confined to specific endocrine cells.

In terms of biological role, xenin stimulates exocrine pancreatic secretion. It inhibits pentagastrin-stimulated secretion of acid, to induce exocrine pancreatic secretion and to affect small and large intestinal motility. In the gut, xenin interacts with the neurotensin receptor. This chain is Coatomer subunit alpha (COPA), found in Canis lupus familiaris (Dog).